Reading from the N-terminus, the 164-residue chain is Transcription elongation factor GreA (164 aa).

Residues 50–76 (YHAAREEQGQQEARIRQLQELLNNAKV) are a coiled coil.

This sequence belongs to the GreA/GreB family.

Functionally, necessary for efficient RNA polymerase transcription elongation past template-encoded arresting sites. The arresting sites in DNA have the property of trapping a certain fraction of elongating RNA polymerases that pass through, resulting in locked ternary complexes. Cleavage of the nascent transcript by cleavage factors such as GreA or GreB allows the resumption of elongation from the new 3'terminus. GreA releases sequences of 2 to 3 nucleotides. The polypeptide is Transcription elongation factor GreA (Mycolicibacterium smegmatis (strain ATCC 700084 / mc(2)155) (Mycobacterium smegmatis)).